The primary structure comprises 230 residues: Large ribosomal subunit protein uL1 (230 aa).

This sequence belongs to the universal ribosomal protein uL1 family. Part of the 50S ribosomal subunit.

In terms of biological role, binds directly to 23S rRNA. The L1 stalk is quite mobile in the ribosome, and is involved in E site tRNA release. Protein L1 is also a translational repressor protein, it controls the translation of the L11 operon by binding to its mRNA. The polypeptide is Large ribosomal subunit protein uL1 (Desulforapulum autotrophicum (strain ATCC 43914 / DSM 3382 / VKM B-1955 / HRM2) (Desulfobacterium autotrophicum)).